A 692-amino-acid polypeptide reads, in one-letter code: Ribonuclease J (692 aa).

Residues 1 to 91 form a disordered region; sequence MTDNNQNNEN…RNYAKEELDN (91 aa). Residues 9–25 show a composition bias toward basic and acidic residues; it reads ENHENSSENSKDHHEAR. The span at 57–79 shows a compositional bias: basic residues; the sequence is HHKKEHRPNKKPNNHHKPKHASQ. An N6-acetyllysine mark is found at Lys-135 and Lys-141. The Zn(2+) site is built by His-209, His-211, Asp-213, His-214, His-278, and Asp-300. N6-acetyllysine is present on residues Lys-324, Lys-338, and Lys-398. A substrate-binding site is contributed by 501-505; it reads HVSGH. Residue Lys-512 is modified to N6-acetyllysine. His-527 lines the Zn(2+) pocket. An N6-acetyllysine mark is found at Lys-548, Lys-635, and Lys-650.

This sequence belongs to the metallo-beta-lactamase superfamily. RNA-metabolizing metallo-beta-lactamase-like family. Bacterial RNase J subfamily. Homodimer. Homotetramer; dimer of homodimers. Interacts with RNA helicase RhpA, might be a member of a minimal RNA degradosome complex. Requires Zn(2+) as cofactor. Post-translationally, acetylated on nine lysine residues. Some of the residues are acetylated by multiple different mechanisms. RimL is partially responsible for the acetylation of Lys-324, Lys-398 and Lys-650. HPB8_1270 homolog is partially responsible for the acetylation of Lys-324, Lys-398, Lys-512 and Lys-650. Acetyl-phosphate-mediated non-enzymatic acetylation pathway takes part in the acetylation of Lys-135, Lys-324, Lys-398, Lys-512 and Lys-650. Acetylation of the remaining residues Lys-141, Lys-338, Lys-548 and Lys-635 occurs by a yet undetermined mechanism. Acetylation on a number of these residues is important for growth regulation and proper cell morphology.

The protein resides in the cytoplasm. With respect to regulation, catalytic activity is regulated by the balance between homodimers and homotetramers, with homotetramers being the active forms of this enzyme. Acetylation allosterically regulates the homooligomerization state and hence the catalytic activity. Functionally, an RNase that has 5'-3' exoribonuclease and endoribonuclease activity. Degrades 5'-monophosphorylated ssRNA and dsRNA, considerably more active on ssRNA. Association with RhpA significantly increases the dsRNase activity. Degrades RNA substrate with hairpin structures at both ends with low activity, but presence of RhpA significantly increases the activity on this substrate. Stimulates ATPase activity of RNA helicase RhpA. Involved in stabilization of mRNA but apparently not rRNA. The polypeptide is Ribonuclease J (Helicobacter pylori (strain J99 / ATCC 700824) (Campylobacter pylori J99)).